Reading from the N-terminus, the 226-residue chain is Adenosine 5'-phosphosulfate reductase (226 aa).

4 residues coordinate [4Fe-4S] cluster: Cys112, Cys113, Cys195, and Cys198. The active-site Nucleophile; cysteine thiosulfonate intermediate is Cys221.

Belongs to the PAPS reductase family. CysH subfamily. Requires [4Fe-4S] cluster as cofactor.

It is found in the cytoplasm. The catalysed reaction is [thioredoxin]-disulfide + sulfite + AMP + 2 H(+) = adenosine 5'-phosphosulfate + [thioredoxin]-dithiol. It participates in sulfur metabolism; hydrogen sulfide biosynthesis; sulfite from sulfate. In terms of biological role, catalyzes the formation of sulfite from adenosine 5'-phosphosulfate (APS) using thioredoxin as an electron donor. The polypeptide is Adenosine 5'-phosphosulfate reductase (Bacillus anthracis (strain A0248)).